We begin with the raw amino-acid sequence, 274 residues long: MAIHLYKTSTPSTRNRAVDSQVKSNPRNNLIYGQHRCGKGRNARGIITARHRGGGHKRLYRKIDFRRNEKDIYGRIVTIEYDPNRNAYICLIHYGDGEKRYILHPRGAIIGDTIVSGTEVPIKMGNALPLTDMPLGTAIHNIEITLGKGGQLARAAGAVAKLIAKEGKSATLKLPSGEVRLISKNCSATVGQVGNVGVNQKSLGRAGSKCWLGKRPVVRGVVMNPVDHPHGGGEGRAPIGRKKPATPWGYPALGRRSRKRNKYSDNLILRRRSK.

Positions 224-274 (NPVDHPHGGGEGRAPIGRKKPATPWGYPALGRRSRKRNKYSDNLILRRRSK) are disordered.

The protein belongs to the universal ribosomal protein uL2 family. In terms of assembly, part of the 50S ribosomal subunit.

The protein resides in the plastid. It localises to the chloroplast. The protein is Large ribosomal subunit protein uL2cz/uL2cy (rpl2-A) of Carica papaya (Papaya).